The sequence spans 214 residues: Ribonuclease HII (214 aa).

The RNase H type-2 domain occupies 26-214; that stretch reads EIVCGVDEAG…PVREAFDLIR (189 aa). A divalent metal cation-binding residues include D32, E33, and D124.

It belongs to the RNase HII family. Mn(2+) serves as cofactor. Requires Mg(2+) as cofactor.

It localises to the cytoplasm. The enzyme catalyses Endonucleolytic cleavage to 5'-phosphomonoester.. Its function is as follows. Endonuclease that specifically degrades the RNA of RNA-DNA hybrids. In Burkholderia thailandensis (strain ATCC 700388 / DSM 13276 / CCUG 48851 / CIP 106301 / E264), this protein is Ribonuclease HII.